We begin with the raw amino-acid sequence, 934 residues long: uncharacterized protein (934 aa).

The first 24 residues, 1-24, serve as a signal peptide directing secretion; it reads MKLKKRYLLLGSTLTVSAALILSA. The N-palmitoyl cysteine moiety is linked to residue C25. C25 carries S-diacylglycerol cysteine lipidation. The segment at 111–131 is disordered; sequence SGLKGRAQKNGSTDSSDGSSK. The segment covering 119–131 has biased composition (polar residues); the sequence is KNGSTDSSDGSSK.

The protein resides in the cell membrane. This is an uncharacterized protein from Mycoplasma genitalium (strain ATCC 33530 / DSM 19775 / NCTC 10195 / G37) (Mycoplasmoides genitalium).